The chain runs to 83 residues: Cytochrome b559 subunit alpha (83 aa).

The chain crosses the membrane as a helical span at residues 21-35 (IIHSITIPSLFIAGW). Histidine 23 lines the heme pocket.

Heterodimer of an alpha subunit and a beta subunit. PSII is composed of 1 copy each of membrane proteins PsbA, PsbB, PsbC, PsbD, PsbE, PsbF, PsbH, PsbI, PsbJ, PsbK, PsbL, PsbM, PsbT, PsbX, PsbY, PsbZ, Psb30/Ycf12, at least 3 peripheral proteins of the oxygen-evolving complex and a large number of cofactors. It forms dimeric complexes. Heme b is required as a cofactor.

The protein localises to the plastid. The protein resides in the chloroplast thylakoid membrane. This b-type cytochrome is tightly associated with the reaction center of photosystem II (PSII). PSII is a light-driven water:plastoquinone oxidoreductase that uses light energy to abstract electrons from H(2)O, generating O(2) and a proton gradient subsequently used for ATP formation. It consists of a core antenna complex that captures photons, and an electron transfer chain that converts photonic excitation into a charge separation. This is Cytochrome b559 subunit alpha from Pisum sativum (Garden pea).